A 380-amino-acid polypeptide reads, in one-letter code: Crotonobetainyl-CoA reductase (380 aa).

This sequence belongs to the acyl-CoA dehydrogenase family. As to quaternary structure, homotetramer. Requires FAD as cofactor.

It localises to the cytoplasm. The catalysed reaction is 4-(trimethylamino)butanoyl-CoA + oxidized [electron-transfer flavoprotein] + H(+) = crotonobetainyl-CoA + reduced [electron-transfer flavoprotein]. The protein operates within amine and polyamine metabolism; carnitine metabolism. Catalyzes the reduction of crotonobetainyl-CoA to gamma-butyrobetainyl-CoA. The protein is Crotonobetainyl-CoA reductase of Escherichia coli O6:K15:H31 (strain 536 / UPEC).